A 533-amino-acid chain; its full sequence is Light-independent protochlorophyllide reductase subunit B (533 aa).

Aspartate 36 contributes to the [4Fe-4S] cluster binding site. The Proton donor role is filled by aspartate 292. 428–429 (GL) contacts substrate.

It belongs to the ChlB/BchB/BchZ family. In terms of assembly, protochlorophyllide reductase is composed of three subunits; BchL, BchN and BchB. Forms a heterotetramer of two BchB and two BchN subunits. [4Fe-4S] cluster serves as cofactor.

It carries out the reaction chlorophyllide a + oxidized 2[4Fe-4S]-[ferredoxin] + 2 ADP + 2 phosphate = protochlorophyllide a + reduced 2[4Fe-4S]-[ferredoxin] + 2 ATP + 2 H2O. The protein operates within porphyrin-containing compound metabolism; bacteriochlorophyll biosynthesis (light-independent). Functionally, component of the dark-operative protochlorophyllide reductase (DPOR) that uses Mg-ATP and reduced ferredoxin to reduce ring D of protochlorophyllide (Pchlide) to form chlorophyllide a (Chlide). This reaction is light-independent. The NB-protein (BchN-BchB) is the catalytic component of the complex. This Prosthecochloris aestuarii (strain DSM 271 / SK 413) protein is Light-independent protochlorophyllide reductase subunit B.